Consider the following 242-residue polypeptide: tRNA pseudouridine synthase A (242 aa).

Asp51 acts as the Nucleophile in catalysis. Tyr107 lines the substrate pocket.

It belongs to the tRNA pseudouridine synthase TruA family. Homodimer.

It catalyses the reaction uridine(38/39/40) in tRNA = pseudouridine(38/39/40) in tRNA. Formation of pseudouridine at positions 38, 39 and 40 in the anticodon stem and loop of transfer RNAs. This is tRNA pseudouridine synthase A from Helicobacter pylori (strain ATCC 700392 / 26695) (Campylobacter pylori).